Reading from the N-terminus, the 552-residue chain is MANPGGGAVCNGKLHNHKKQSNGSQSRNCTKNGIVKEAQQNGKPHFYDKLIVESFEEAPLHVMVFTYMGYGIGTLFGYLRDFLRNWGIEKCNAAVERKEQKDFVPLYQDFENFYTRNLYMRIRDNWNRPICSAPGPLFDLMERVSDDYNWTFRFTGRVIKDVINMGSYNFLGLAAKYDESMRTIKDVLEVYGTGVASTRHEMGTLDKHKELEDLVAKFLNVEAAMVFGMGFATNSMNIPALVGKGCLILSDELNHTSLVLGARLSGATIRIFKHNNTQSLEKLLRDAVIYGQPRTRRAWKKILILVEGVYSMEGSIVHLPQIIALKKKYKAYLYIDEAHSIGAVGPTGRGVTEFFGLDPHEVDVLMGTFTKSFGASGGYIAGRKDLVDYLRVHSHSAVYASSMSPPIAEQIIRSLKLIMGLDGTTQGLQRVQQLAKNTRYFRQRLQEMGFIIYGNENASVVPLLLYMPGKVAAFARHMLEKKIGVVVVGFPATPLAEARARFCVSAAHTREMLDTVLEALDEMGDLLQLKYSRHKKSARPELYDETSFELED.

The disordered stretch occupies residues 1-29 (MANPGGGAVCNGKLHNHKKQSNGSQSRNC). Residues 59–79 (PLHVMVFTYMGYGIGTLFGYL) traverse the membrane as a helical segment. Lysine 371 carries the post-translational modification N6-(pyridoxal phosphate)lysine.

It belongs to the class-II pyridoxal-phosphate-dependent aminotransferase family. Component of the serine palmitoyltransferase (SPT) complex, which is composed of SPTLC1, SPTLC2 or SPTLC3 and SPTSSA or SPTSSB. The heterodimer consisting of SPTLC1 and SPTLC2/SPTLC3 forms the catalytic core of the enzyme, while SPTSSA or SPTSSB subunits determine substrate specificity. SPT also interacts with ORMDL proteins, especially ORMDL3, which negatively regulate SPT activity in the presence of ceramides. Pyridoxal 5'-phosphate serves as cofactor. Expressed in most tissues, except peripheral blood cells and bone marrow, with highest levels in heart, kidney, liver, uterus and skin.

The protein localises to the endoplasmic reticulum membrane. The enzyme catalyses L-serine + hexadecanoyl-CoA + H(+) = 3-oxosphinganine + CO2 + CoA. The catalysed reaction is dodecanoyl-CoA + L-serine + H(+) = 3-oxotetradecasphinganine + CO2 + CoA. It catalyses the reaction tetradecanoyl-CoA + L-serine + H(+) = 3-oxohexadecasphinganine + CO2 + CoA. It carries out the reaction octadecanoyl-CoA + L-serine + H(+) = 3-oxoeicosasphinganine + CO2 + CoA. The protein operates within lipid metabolism; sphingolipid metabolism. With respect to regulation, SPT complex catalytic activity is negatively regulated by ORMDL proteins, including ORMDL3, in the presence of ceramides. This mechanism allows to maintain ceramide levels at sufficient concentrations for the production of complex sphingolipids, but which prevents the accumulation of ceramides to levels that trigger apoptosis. Its function is as follows. Component of the serine palmitoyltransferase multisubunit enzyme (SPT) that catalyzes the initial and rate-limiting step in sphingolipid biosynthesis by condensing L-serine and activated acyl-CoA (most commonly palmitoyl-CoA) to form long-chain bases. The SPT complex is composed of SPTLC1, SPTLC2 or SPTLC3 and SPTSSA or SPTSSB. Within this complex, the heterodimer consisting of SPTLC1 and SPTLC2/SPTLC3 forms the catalytic core. The composition of the serine palmitoyltransferase (SPT) complex determines the substrate preference. The SPTLC1-SPTLC2-SPTSSA complex shows a strong preference for C16-CoA substrate, while the SPTLC1-SPTLC3-SPTSSA isozyme uses both C14-CoA and C16-CoA as substrates, with a slight preference for C14-CoA. The SPTLC1-SPTLC2-SPTSSB complex shows a strong preference for C18-CoA substrate, while the SPTLC1-SPTLC3-SPTSSB isozyme displays an ability to use a broader range of acyl-CoAs, without apparent preference. This Homo sapiens (Human) protein is Serine palmitoyltransferase 3.